The following is a 318-amino-acid chain: Ubiquitin-like domain-containing CTD phosphatase 1 (318 aa).

The Ubiquitin-like domain occupies 3–81 (LSLIIKWGGQ…IMMMGTREES (79 aa)). Positions 133–294 (PREGKKLLVL…LKLTQYLKEI (162 aa)) constitute an FCP1 homology domain. Residues D143, D145, and D253 each coordinate Mg(2+).

The cofactor is Mg(2+).

The protein resides in the nucleus. The catalysed reaction is O-phospho-L-seryl-[protein] + H2O = L-seryl-[protein] + phosphate. It catalyses the reaction O-phospho-L-threonyl-[protein] + H2O = L-threonyl-[protein] + phosphate. Dephosphorylates 26S nuclear proteasomes, thereby decreasing their proteolytic activity. Recruited to the 19S regulatory particle of the 26S proteasome where it dephosphorylates 19S component PSMC2 which impairs PSMC2 ATPase activity and disrupts 26S proteasome assembly. Has also been reported to stimulate the proteolytic activity of the 26S proteasome. This is Ubiquitin-like domain-containing CTD phosphatase 1 (UBLCP1) from Gallus gallus (Chicken).